We begin with the raw amino-acid sequence, 149 residues long: MKVLLIKDVKSLGKAGEIKEVKDGYGNNFLIGKGLAKAATPDVIRQYEAAQKRKEEELKYEISNLEKLKDELSKITLVIKKTLGANGSLFGSVSKEEIAEELEKAHHLIVDKKAIEIDKNHLKAVGLYDVQVKLGHAISATLKVDVQGE.

This sequence belongs to the bacterial ribosomal protein bL9 family.

Functionally, binds to the 23S rRNA. This is Large ribosomal subunit protein bL9 from Campylobacter curvus (strain 525.92).